A 664-amino-acid polypeptide reads, in one-letter code: Probable L-type lectin-domain containing receptor kinase V.3 (664 aa).

Positions 1-26 (MSMSCKINWLMVLVIIALSNLESSLG) are cleaved as a signal peptide. The Extracellular segment spans residues 27–278 (RLVFEGSAGL…YPKAESQVKL (252 aa)). Residues 28–250 (LVFEGSAGLM…AIHYMWMWYV (223 aa)) are legume-lectin like. 5 N-linked (GlcNAc...) asparagine glycosylation sites follow: Asn-69, Asn-116, Asn-122, Asn-174, and Asn-197. Residues 279-299 (IVLVTFLTLALFVALAASALI) traverse the membrane as a helical segment. The Cytoplasmic segment spans residues 300–664 (VFFYKRHKKL…LPSGRPRLFL (365 aa)). The 283-residue stretch at 335–617 (NGFKQLLGEG…GVSELPDNLL (283 aa)) folds into the Protein kinase domain. Residues 341–349 (LGEGGFGPV) and Lys-364 each bind ATP. Asp-461 acts as the Proton acceptor in catalysis.

In the C-terminal section; belongs to the protein kinase superfamily. Ser/Thr protein kinase family. The protein in the N-terminal section; belongs to the leguminous lectin family.

The protein localises to the cell membrane. The catalysed reaction is L-seryl-[protein] + ATP = O-phospho-L-seryl-[protein] + ADP + H(+). It carries out the reaction L-threonyl-[protein] + ATP = O-phospho-L-threonyl-[protein] + ADP + H(+). In Arabidopsis thaliana (Mouse-ear cress), this protein is Probable L-type lectin-domain containing receptor kinase V.3 (LECRK53).